The primary structure comprises 432 residues: Enolase (432 aa).

A (2R)-2-phosphoglycerate-binding site is contributed by Q164. E206 serves as the catalytic Proton donor. Positions 243, 284, and 311 each coordinate Mg(2+). Positions 336, 365, 366, and 387 each coordinate (2R)-2-phosphoglycerate. K336 (proton acceptor) is an active-site residue.

This sequence belongs to the enolase family. Mg(2+) is required as a cofactor.

The protein resides in the cytoplasm. Its subcellular location is the secreted. The protein localises to the cell surface. The enzyme catalyses (2R)-2-phosphoglycerate = phosphoenolpyruvate + H2O. Its pathway is carbohydrate degradation; glycolysis; pyruvate from D-glyceraldehyde 3-phosphate: step 4/5. In terms of biological role, catalyzes the reversible conversion of 2-phosphoglycerate (2-PG) into phosphoenolpyruvate (PEP). It is essential for the degradation of carbohydrates via glycolysis. The protein is Enolase of Synechococcus sp. (strain JA-3-3Ab) (Cyanobacteria bacterium Yellowstone A-Prime).